Here is a 60-residue protein sequence, read N- to C-terminus: Pepsin A (60 aa).

The propeptide at 1-45 is activation peptide; that stretch reads FIIKVPLVKKKSLRKNLKEHGLLKDFLKKHSPNPASKYFPQEAAV.

Belongs to the peptidase A1 family.

Its subcellular location is the secreted. It catalyses the reaction Preferential cleavage: hydrophobic, preferably aromatic, residues in P1 and P1' positions. Cleaves 1-Phe-|-Val-2, 4-Gln-|-His-5, 13-Glu-|-Ala-14, 14-Ala-|-Leu-15, 15-Leu-|-Tyr-16, 16-Tyr-|-Leu-17, 23-Gly-|-Phe-24, 24-Phe-|-Phe-25 and 25-Phe-|-Tyr-26 bonds in the B chain of insulin.. Its function is as follows. Shows particularly broad specificity; although bonds involving phenylalanine and leucine are preferred, many others are also cleaved to some extent. The chain is Pepsin A (PGA) from Ursus thibetanus (Asiatic black bear).